Reading from the N-terminus, the 155-residue chain is Ribonuclease 8 (155 aa).

Residues 1-28 (MAPARAGCCPLLLLLLLGLWVAEIPVSA) form the signal peptide. Intrachain disulfides connect Cys65-Cys119, Cys83-Cys134, and Cys90-Cys97. Residues 66-70 (KDLNT) and Lys91 contribute to the substrate site. The active-site Proton donor is His150.

Belongs to the pancreatic ribonuclease family.

It is found in the secreted. Functionally, has a low ribonuclease activity. This chain is Ribonuclease 8 (RNASE8), found in Saguinus oedipus (Cotton-top tamarin).